Consider the following 239-residue polypeptide: Purine nucleoside phosphorylase DeoD-type (239 aa).

His-5 contributes to the a purine D-ribonucleoside binding site. The phosphate site is built by Gly-21 and Arg-25. N6-acetyllysine is present on Lys-27. Residues Arg-44 and 88–91 (RVGS) each bind phosphate. Residues 180–182 (EME) and 204–205 (SD) contribute to the a purine D-ribonucleoside site. The active-site Proton donor is Asp-205.

The protein belongs to the PNP/UDP phosphorylase family. In terms of assembly, homohexamer; trimer of homodimers.

The catalysed reaction is a purine D-ribonucleoside + phosphate = a purine nucleobase + alpha-D-ribose 1-phosphate. It catalyses the reaction a purine 2'-deoxy-D-ribonucleoside + phosphate = a purine nucleobase + 2-deoxy-alpha-D-ribose 1-phosphate. In terms of biological role, catalyzes the reversible phosphorolytic breakdown of the N-glycosidic bond in the beta-(deoxy)ribonucleoside molecules, with the formation of the corresponding free purine bases and pentose-1-phosphate. This chain is Purine nucleoside phosphorylase DeoD-type, found in Escherichia coli O8 (strain IAI1).